A 510-amino-acid chain; its full sequence is Membrane-bound transcription factor site-2 protease (510 aa).

Residues 1–3 (MIP) lie on the Cytoplasmic side of the membrane. Residues 4–24 (VSLVVVVVGGWTAVYLADLVL) traverse the membrane as a helical segment. Over 25–74 (KSSVYFKHSYEDWLEKNGLSISPFHIRWQTSVFNRAFYSWGRRKARMLYQ) the chain is Lumenal. 2 consecutive transmembrane segments (helical) span residues 75–95 (WFNF…FLLG) and 96–107 (KTLMQTLAQMMA). Residues 108–135 (DSPSSSSSSSSSSSSSSSSSIHNEQVLQ) lie on the Lumenal side of the membrane. A helical transmembrane segment spans residues 136-160 (VVVPGINLPVNQLTYFFAAVLISGV). Residue histidine 162 coordinates Zn(2+). The active site involves glutamate 163. 3 helical membrane passes run 165 to 177 (GHGI…QVRF), 178 to 200 (NGFG…TTHL), and 220 to 242 (FVLA…PFYY). Histidine 166 contacts Zn(2+). The Lumenal segment spans residues 243–437 (TGVGVLITEV…LPVIVETFVK (195 aa)). N-linked (GlcNAc...) asparagine glycosylation is present at asparagine 328. Transmembrane regions (helical) follow at residues 438-455 (YLIS…VPCF) and 456-467 (ALDGQWILNSFL). Residues 468-483 (DATLTSVIGDNDVKDL) lie on the Lumenal side of the membrane. A helical membrane pass occupies residues 484–504 (IGFFILLGGSVLLAANVTLGL). Topologically, residues 505 to 510 (WMVTAR) are cytoplasmic.

Belongs to the peptidase M50A family. Zn(2+) serves as cofactor.

The protein resides in the membrane. It localises to the cytoplasm. Its subcellular location is the golgi apparatus membrane. The enzyme catalyses Cleaves several transcription factors that are type-2 transmembrane proteins within membrane-spanning domains. Known substrates include sterol regulatory element-binding protein (SREBP) -1, SREBP-2 and forms of the transcriptional activator ATF6. SREBP-2 is cleaved at the site 477-DRSRILL-|-CVLTFLCLSFNPLTSLLQWGGA-505. The residues Asn-Pro, 11 residues distal to the site of cleavage in the membrane-spanning domain, are important for cleavage by S2P endopeptidase. Replacement of either of these residues does not prevent cleavage, but there is no cleavage if both of these residues are replaced.. In terms of biological role, zinc metalloprotease that mediates intramembrane proteolysis of proteins such as ATF6, ATF6B, SREBF1/SREBP1 and SREBF2/SREBP2. Catalyzes the second step in the proteolytic activation of the sterol regulatory element-binding proteins (SREBPs) SREBF1/SREBP1 and SREBF2/SREBP2: cleaves SREBPs within the first transmembrane segment, thereby releasing the N-terminal segment with a portion of the transmembrane segment attached. Mature N-terminal SREBP fragments shuttle to the nucleus and activate gene transcription. Also mediates the second step in the proteolytic activation of the cyclic AMP-dependent transcription factor ATF-6 (ATF6 and ATF6B). Involved in intramembrane proteolysis during bone formation. In astrocytes and osteoblasts, upon DNA damage and ER stress, mediates the second step of the regulated intramembrane proteolytic activation of the transcription factor CREB3L1, leading to the inhibition of cell-cycle progression. In Cricetulus griseus (Chinese hamster), this protein is Membrane-bound transcription factor site-2 protease (MBTPS2).